Reading from the N-terminus, the 234-residue chain is uncharacterized protein (234 aa).

An NADP(+)-binding site is contributed by Val-10–Val-34. Ser-143 lines the substrate pocket. Catalysis depends on Tyr-156, which acts as the Proton acceptor.

It belongs to the short-chain dehydrogenases/reductases (SDR) family.

This is an uncharacterized protein from Staphylococcus saprophyticus subsp. saprophyticus (strain ATCC 15305 / DSM 20229 / NCIMB 8711 / NCTC 7292 / S-41).